The sequence spans 278 residues: Bifunctional protein FolD (278 aa).

NADP(+) is bound by residues 165 to 167 (GRS), S190, and T231.

Belongs to the tetrahydrofolate dehydrogenase/cyclohydrolase family. In terms of assembly, homodimer.

The catalysed reaction is (6R)-5,10-methylene-5,6,7,8-tetrahydrofolate + NADP(+) = (6R)-5,10-methenyltetrahydrofolate + NADPH. It catalyses the reaction (6R)-5,10-methenyltetrahydrofolate + H2O = (6R)-10-formyltetrahydrofolate + H(+). The protein operates within one-carbon metabolism; tetrahydrofolate interconversion. Its function is as follows. Catalyzes the oxidation of 5,10-methylenetetrahydrofolate to 5,10-methenyltetrahydrofolate and then the hydrolysis of 5,10-methenyltetrahydrofolate to 10-formyltetrahydrofolate. The protein is Bifunctional protein FolD of Clostridium acetobutylicum (strain ATCC 824 / DSM 792 / JCM 1419 / IAM 19013 / LMG 5710 / NBRC 13948 / NRRL B-527 / VKM B-1787 / 2291 / W).